Here is a 199-residue protein sequence, read N- to C-terminus: MSRYTGSIWKVSRRLNYSLSETGKELIKRPYAPGMHGKKRIKAKDYGLQLQEKQKVRFTYGISEKQFKKIFKDAGKLKGIHGEMFLFLLESRLDNVVYRLGFAKTRQQARQLVNHGHILVDGKKVDIPSYSLRVGQIITLKEKSKDLIIVKEALANKLNRVDYISLNKELVGKYVRIPHRDELLPNIKEQLIVEFYNRK.

Residues 91-154 form the S4 RNA-binding domain; sequence SRLDNVVYRL…KDLIIVKEAL (64 aa).

It belongs to the universal ribosomal protein uS4 family. Part of the 30S ribosomal subunit. Contacts protein S5. The interaction surface between S4 and S5 is involved in control of translational fidelity.

One of the primary rRNA binding proteins, it binds directly to 16S rRNA where it nucleates assembly of the body of the 30S subunit. Functionally, with S5 and S12 plays an important role in translational accuracy. This Phytoplasma mali (strain AT) protein is Small ribosomal subunit protein uS4.